We begin with the raw amino-acid sequence, 90 residues long: DNA-directed RNA polymerase subunit omega (90 aa).

Residues arginine 69–arginine 90 form a disordered region.

The protein belongs to the RNA polymerase subunit omega family. In terms of assembly, the RNAP catalytic core consists of 2 alpha, 1 beta, 1 beta' and 1 omega subunit. When a sigma factor is associated with the core the holoenzyme is formed, which can initiate transcription.

The catalysed reaction is RNA(n) + a ribonucleoside 5'-triphosphate = RNA(n+1) + diphosphate. Promotes RNA polymerase assembly. Latches the N- and C-terminal regions of the beta' subunit thereby facilitating its interaction with the beta and alpha subunits. The protein is DNA-directed RNA polymerase subunit omega of Aliivibrio salmonicida (strain LFI1238) (Vibrio salmonicida (strain LFI1238)).